The sequence spans 277 residues: tRNA (guanine-N(7)-)-methyltransferase (277 aa).

The interval 1–37 is disordered; it reads MAGTETGDAAGTEAPQPQKRYYRQRAHSNPMADHTLR. The residue at position 28 (Ser-28) is a Phosphoserine. S-adenosyl-L-methionine is bound by residues Gly-85, Glu-108, Arg-110, Asn-141, Ala-142, and Leu-161. Asp-164 is an active-site residue. The alphaC helix stretch occupies residues 165–173; sequence PHFKRTKHK. Thr-239 and Glu-241 together coordinate S-adenosyl-L-methionine. The tract at residues 239-247 is alpha6 helix; the sequence is TEEGKKVLR.

This sequence belongs to the class I-like SAM-binding methyltransferase superfamily. TrmB family. Catalytic component of the METTL1-WDR4 complex, composed of METTL1 and WDR4. Phosphorylation at Ser-28 by PKB/AKT1 inactivates its methyltransferase activity via a steric interference mechanism in the active site that locally disrupts the catalytic center. Phosphorylation at Ser-28 does not affect the interaction with WDR4.

The protein localises to the nucleus. The enzyme catalyses guanosine(46) in tRNA + S-adenosyl-L-methionine = N(7)-methylguanosine(46) in tRNA + S-adenosyl-L-homocysteine. It catalyses the reaction a guanosine in mRNA + S-adenosyl-L-methionine = an N(7)-methylguanosine in mRNA + S-adenosyl-L-homocysteine. The catalysed reaction is a guanosine in miRNA + S-adenosyl-L-methionine = an N(7)-methylguanosine in miRNA + S-adenosyl-L-homocysteine. The protein operates within tRNA modification; N(7)-methylguanine-tRNA biosynthesis. Its function is as follows. Catalytic component of METTL1-WDR4 methyltransferase complex that mediates the formation of N(7)-methylguanine in a subset of RNA species, such as tRNAs, mRNAs and microRNAs (miRNAs). Catalyzes the formation of N(7)-methylguanine at position 46 (m7G46) in a large subset of tRNAs that contain the 5'-RAGGU-3' motif within the variable loop. M7G46 interacts with C13-G22 in the D-loop to stabilize tRNA tertiary structure and protect tRNAs from decay. Also acts as a methyltransferase for a subset of internal N(7)-methylguanine in mRNAs. Internal N(7)-methylguanine methylation of mRNAs in response to stress promotes their relocalization to stress granules, thereby suppressing their translation. Also methylates a specific subset of miRNAs, such as let-7. N(7)-methylguanine methylation of let-7 miRNA promotes let-7 miRNA processing by disrupting an inhibitory secondary structure within the primary miRNA transcript (pri-miRNA). Acts as a regulator of embryonic stem cell self-renewal and differentiation. The polypeptide is tRNA (guanine-N(7)-)-methyltransferase (Bos taurus (Bovine)).